A 595-amino-acid polypeptide reads, in one-letter code: DNA primase (595 aa).

The CHC2-type zinc finger occupies 38-62 (CPFHDEKTPSFIVYPTRGHYHCYGC). The Toprim domain occupies 251 to 331 (RRVILVEGQA…GITAIVCRLP (81 aa)). 3 residues coordinate Mg(2+): Glu257, Asp302, and Asp304. The segment covering 430-441 (KGKKVSAKEPSS) has biased composition (basic and acidic residues). The disordered stretch occupies residues 430-451 (KGKKVSAKEPSSESKQTSTEGK).

It belongs to the DnaG primase family. As to quaternary structure, monomer. Interacts with DnaB. The cofactor is Zn(2+). Mg(2+) serves as cofactor.

The catalysed reaction is ssDNA + n NTP = ssDNA/pppN(pN)n-1 hybrid + (n-1) diphosphate.. In terms of biological role, RNA polymerase that catalyzes the synthesis of short RNA molecules used as primers for DNA polymerase during DNA replication. In Chlamydia trachomatis serovar D (strain ATCC VR-885 / DSM 19411 / UW-3/Cx), this protein is DNA primase.